Reading from the N-terminus, the 300-residue chain is Tetrahydromethanopterin S-methyltransferase subunit E (300 aa).

The next 6 membrane-spanning stretches (helical) occupy residues 62-82 (PVSY…LMGM), 86-106 (PILA…AYSV), 135-155 (PIVG…YLAV), 158-178 (LGNP…VGAI), 226-246 (YFCS…IIFL), and 261-281 (LITK…TTLL).

The protein belongs to the MtrE family. As to quaternary structure, the complex is composed of 8 subunits; MtrA, MtrB, MtrC, MtrD, MtrE, MtrF, MtrG and MtrH.

It localises to the cell membrane. The catalysed reaction is 5-methyl-5,6,7,8-tetrahydromethanopterin + coenzyme M + 2 Na(+)(in) = 5,6,7,8-tetrahydromethanopterin + methyl-coenzyme M + 2 Na(+)(out). The protein operates within one-carbon metabolism; methanogenesis from CO(2); methyl-coenzyme M from 5,10-methylene-5,6,7,8-tetrahydromethanopterin: step 2/2. In terms of biological role, part of a complex that catalyzes the formation of methyl-coenzyme M and tetrahydromethanopterin from coenzyme M and methyl-tetrahydromethanopterin. This is an energy-conserving, sodium-ion translocating step. The protein is Tetrahydromethanopterin S-methyltransferase subunit E of Methanococcus aeolicus (strain ATCC BAA-1280 / DSM 17508 / OCM 812 / Nankai-3).